Here is a 457-residue protein sequence, read N- to C-terminus: Multidrug resistance protein MdtK (457 aa).

A run of 12 helical transmembrane segments spans residues 11–31 (LLALAIPVILAQVAQTAMGFV), 53–73 (IWLPAILFGHGLLLALTPVIA), 93–113 (WLASFVSVLVMIVLWNAGYII), 127–147 (AVGYLRALLWGAPGYLFFQVA), 160–180 (GMVMGFLGLLVNIPVNYIFIY), 188–208 (LGGIGCGVATAAVYWVMFIAM), 243–263 (LPIALALFFEVTLFAVVALLV), 276–296 (IALNFSSLMFVLPMSLAAAVT), 314–334 (AARTGLSVGVCMAVVTAIFTV), 357–377 (LMLLAAVYQISDSIQVIGSGI), 387–407 (IFFITFTAYWVLGLPSGYILA), and 418–438 (PAGFWMGFIIGLTSAAVLMML).

This sequence belongs to the multi antimicrobial extrusion (MATE) (TC 2.A.66.1) family. MdtK subfamily.

It is found in the cell inner membrane. Functionally, multidrug efflux pump that functions probably as a Na(+)/drug antiporter. The chain is Multidrug resistance protein MdtK from Salmonella arizonae (strain ATCC BAA-731 / CDC346-86 / RSK2980).